The sequence spans 217 residues: Chloramphenicol acetyltransferase (217 aa).

Catalysis depends on His193, which acts as the Proton acceptor.

Belongs to the chloramphenicol acetyltransferase family. In terms of assembly, homotrimer.

It carries out the reaction chloramphenicol + acetyl-CoA = chloramphenicol 3-acetate + CoA. Its function is as follows. This enzyme is an effector of chloramphenicol resistance in bacteria. The chain is Chloramphenicol acetyltransferase (cat) from Proteus mirabilis.